Consider the following 868-residue polypeptide: Leucine--tRNA ligase (868 aa).

The 'HIGH' region motif lies at 42-52 (PYPSGKLHMGH). The 'KMSKS' region motif lies at 627-631 (KMSKS). Lys-630 contacts ATP.

Belongs to the class-I aminoacyl-tRNA synthetase family.

The protein resides in the cytoplasm. The catalysed reaction is tRNA(Leu) + L-leucine + ATP = L-leucyl-tRNA(Leu) + AMP + diphosphate. The polypeptide is Leucine--tRNA ligase (Pseudomonas putida (strain ATCC 700007 / DSM 6899 / JCM 31910 / BCRC 17059 / LMG 24140 / F1)).